Here is a 305-residue protein sequence, read N- to C-terminus: GTPase Era (305 aa).

The region spanning 13–181 (RCGYVAIVGR…EKLVAERLPE (169 aa)) is the Era-type G domain. Residues 21 to 28 (GRPNVGKS) are G1. 21 to 28 (GRPNVGKS) serves as a coordination point for GTP. Residues 47–51 (QTTRH) form a G2 region. The tract at residues 68-71 (DTPG) is G3. GTP-binding positions include 68–72 (DTPGL) and 130–133 (NKTD). The interval 130 to 133 (NKTD) is G4. The interval 160–162 (ISA) is G5. In terms of domain architecture, KH type-2 spans 204–288 (VREKIMRQLG…MLNLWVKVKG (85 aa)).

Belongs to the TRAFAC class TrmE-Era-EngA-EngB-Septin-like GTPase superfamily. Era GTPase family. In terms of assembly, monomer.

It localises to the cytoplasm. The protein localises to the cell inner membrane. Its function is as follows. An essential GTPase that binds both GDP and GTP, with rapid nucleotide exchange. Plays a role in 16S rRNA processing and 30S ribosomal subunit biogenesis and possibly also in cell cycle regulation and energy metabolism. In Pseudomonas aeruginosa (strain LESB58), this protein is GTPase Era.